A 505-amino-acid polypeptide reads, in one-letter code: Elsinochrome transporter 1 (505 aa).

The span at 1–10 (MALSGLGSGP) shows a compositional bias: gly residues. A disordered region spans residues 1–25 (MALSGLGSGPEGNPNNHQGKAIPTL). Residues 35-55 (FLFSWVSFLVPFWSWYPFSPL) traverse the membrane as a helical segment. N-linked (GlcNAc...) asparagine glycosylation is found at N64 and N80. The disordered stretch occupies residues 221–295 (DTPTGAGKPP…TEKGESLPLT (75 aa)). Low complexity predominate over residues 255–267 (TPSSPDRSSSTNS). 6 helical membrane passes run 313–333 (VIFS…FGAE), 348–368 (LGLG…LNIV), 391–411 (KALL…IGLA), 417–437 (ATLV…ANGL), 449–469 (VVSG…AIVF), and 479–499 (VFWI…WIKP).

It belongs to the major facilitator superfamily. Nitrate/nitrite porter (TC 2.A.1.8) family.

It is found in the cell membrane. Functionally, major facilitator-type transporter; part of the gene cluster that mediates the biosynthesis of elsinochromes, pigments consisting of at least four interconvertible tautomers (A, B, C and D) that have a core phenolic quinone to which various side chains are attached and which play an important role in fungal pathogenesis. Once elsinochrome is synthesized, it must be exported outside the fungal cells, which is probably accomplished by the ECT1 transporter, to avoid toxicity. This chain is Elsinochrome transporter 1, found in Elsinoe fawcettii (Citrus scab fungus).